The following is a 650-amino-acid chain: Exonuclease 3'-5' domain-containing protein 2 (650 aa).

Over 1–6 (MSRQNL) the chain is Mitochondrial intermembrane. A helical membrane pass occupies residues 7–29 (VALTVTTLLGVAMGGFVLWKGIQ). The Cytoplasmic segment spans residues 30–650 (RRWSKTSRVM…YGDDLPIKLS (621 aa)). A disordered region spans residues 34 to 89 (KTSRVMQQQPQQPQQPQQPQPQPQPQPQPQPEHPQPQQQVPGGREWPPPEDDQLPF). Positions 49–67 (PQQPQPQPQPQPQPQPEHP) are enriched in pro residues. 3 residues coordinate a divalent metal cation: Asp137, Glu139, and Asp275. Residues 184 to 276 (ILADGAILKV…DQVTYAARDA (93 aa)) enclose the 3'-5' exonuclease domain. The segment at 340–373 (SQLKPRNRKAKTDRMVPGNNQGRDPRKHKRKPLG) is disordered.

This sequence belongs to the EXD2 family. As to quaternary structure, homodimer. Interacts with RBBP8, MRE11 and BRCA1. Mg(2+) is required as a cofactor. Requires Mn(2+) as cofactor.

The protein localises to the mitochondrion outer membrane. Its subcellular location is the mitochondrion matrix. It localises to the nucleus. It is found in the chromosome. It carries out the reaction Exonucleolytic cleavage in the 3'- to 5'-direction to yield nucleoside 5'-phosphates.. Functionally, exonuclease that has both 3'-5' exoribonuclease and exodeoxyribonuclease activities, depending on the divalent metal cation used as cofactor. In presence of Mg(2+), only shows 3'-5' exoribonuclease activity, while it shows both exoribonuclease and exodeoxyribonuclease activities in presence of Mn(2+). Acts as an exoribonuclease in mitochondrion, possibly by regulating ATP production and mitochondrial translation. Also involved in the response to DNA damage. Acts as 3'-5' exodeoxyribonuclease for double-strand breaks resection and efficient homologous recombination. Plays a key role in controlling the initial steps of chromosomal break repair, it is recruited to chromatin in a damage-dependent manner and functionally interacts with the MRN complex to accelerate resection through its 3'-5' exonuclease activity, which efficiently processes double-stranded DNA substrates containing nicks. Also involved in response to replicative stress: recruited to stalled forks and is required to stabilize and restart stalled replication forks by restraining excessive fork regression, thereby suppressing their degradation. This is Exonuclease 3'-5' domain-containing protein 2 from Mus musculus (Mouse).